We begin with the raw amino-acid sequence, 237 residues long: Sensory rhodopsin-2 (237 aa).

The Extracellular portion of the chain corresponds to 1 to 2 (MA). A helical transmembrane segment spans residues 3–23 (LTTWFWVGAVGMLAGTVLPIR). At 24–31 (DCIRHPSH) the chain is on the cytoplasmic side. Residues 32–53 (RRYDLVLAGITGLAAIAYTTMG) traverse the membrane as a helical segment. The Extracellular segment spans residues 54-67 (LGITATTVGDRTVY). Residues 68 to 89 (LARYIDWLVTTPLIVLYLAMLA) traverse the membrane as a helical segment. Residues 90–92 (RPG) are Cytoplasmic-facing. The helical transmembrane segment at 93–115 (HRTSAWLLAADVFVIAAGIAAAL) threads the bilayer. The Extracellular segment spans residues 116–119 (TTGV). A helical membrane pass occupies residues 120 to 147 (QRWLFFAVGAAGYAALLYGLLGTLPRAL). The Cytoplasmic segment spans residues 148 to 150 (GDD). The helical transmembrane segment at 151-178 (PRVRSLFVTLRNITVVLWTLYPVVWLLS) threads the bilayer. Residues 179-186 (PAGIGILQ) lie on the Extracellular side of the membrane. The helical transmembrane segment at 187 to 214 (TEMYTIVVVYLDFISKVAFVAFAVLGAD) threads the bilayer. Lys202 is subject to N6-(retinylidene)lysine. The Cytoplasmic portion of the chain corresponds to 215–237 (AVSRLVAADAAAPATAEPTPDGD).

Belongs to the archaeal/bacterial/fungal opsin family. As to quaternary structure, interacts with HTR-II.

The protein localises to the cell membrane. Functionally, photophobic photoreceptor responsible for the negative phototaxis. Activates the sensory rhodopsin II transducer (HTR-II) in response to blue light. The polypeptide is Sensory rhodopsin-2 (sop2) (Halobacterium salinarum (strain ATCC 700922 / JCM 11081 / NRC-1) (Halobacterium halobium)).